A 213-amino-acid polypeptide reads, in one-letter code: Adenylate kinase (213 aa).

ATP is bound at residue 10-15 (GAGKGT). An NMP region spans residues 30–59 (STGDMFRAAMANQTEMGILAKSYIDKGDLV). AMP is bound by residues threonine 31, arginine 36, 57 to 59 (DLV), 86 to 89 (GYPR), and glutamine 93. The LID stretch occupies residues 127–160 (GRIIHKETGETFHKVFNPPVGDYKEEDFYQREDD). Residues arginine 128 and 137–138 (TF) contribute to the ATP site. AMP is bound by residues arginine 157 and arginine 168. Residue glutamine 196 participates in ATP binding.

It belongs to the adenylate kinase family. Monomer.

The protein localises to the cytoplasm. The catalysed reaction is AMP + ATP = 2 ADP. It functions in the pathway purine metabolism; AMP biosynthesis via salvage pathway; AMP from ADP: step 1/1. Functionally, catalyzes the reversible transfer of the terminal phosphate group between ATP and AMP. Plays an important role in cellular energy homeostasis and in adenine nucleotide metabolism. In Streptococcus suis (strain 98HAH33), this protein is Adenylate kinase.